The following is a 293-amino-acid chain: Histamine N-methyltransferase A (293 aa).

Residue Glu28 participates in substrate binding. Residues Gly60, Glu89, Gln94, Ser120, and Ile142 each contribute to the S-adenosyl-L-methionine site. Asn283 is a binding site for substrate.

It belongs to the class I-like SAM-binding methyltransferase superfamily. HNMT family. As to quaternary structure, monomer.

It localises to the cytoplasm. It catalyses the reaction histamine + S-adenosyl-L-methionine = N(tau)-methylhistamine + S-adenosyl-L-homocysteine + H(+). Functionally, inactivates histamine by N-methylation. Plays an important role in degrading histamine and in regulating the airway response to histamine. This is Histamine N-methyltransferase A (hnmt-a) from Xenopus laevis (African clawed frog).